Reading from the N-terminus, the 127-residue chain is Mitochondrial pyruvate carrier 2 (127 aa).

Residues 2–40 (AAAGARGLRATYHRLMDKVELLLPKKLRPLYNHPAGPRT) are Mitochondrial matrix-facing. Position 26 is an N6-acetyllysine (Lys26). The helical transmembrane segment at 41 to 61 (VFFWAPIMKWGLVCAGLADMA) threads the bilayer. Topologically, residues 62-72 (RPAEKLSTAQS) are mitochondrial intermembrane. The chain crosses the membrane as a helical span at residues 73-90 (TVLMATGFIWSRYSLVII). The Mitochondrial matrix portion of the chain corresponds to 91 to 95 (PKNWS). A helical transmembrane segment spans residues 96-115 (LFAVNFFVGSAGASQLFRIW). Residues 116–127 (KYNQELKSKGIQ) lie on the Mitochondrial intermembrane side of the membrane.

Belongs to the mitochondrial pyruvate carrier (MPC) (TC 2.A.105) family. As to quaternary structure, homodimer. Homooligomer. Forms heterodimers with MPC1 and MPC1L. The heterodimer is the more stable and dominant form. As to expression, liver, kidney, and brain.

The protein localises to the mitochondrion inner membrane. The enzyme catalyses pyruvate(out) + H(+)(out) = pyruvate(in) + H(+)(in). Functionally, mediates the uptake of pyruvate into mitochondria. The polypeptide is Mitochondrial pyruvate carrier 2 (Mpc2) (Rattus norvegicus (Rat)).